Consider the following 469-residue polypeptide: Arginine biosynthesis bifunctional protein ArgJ, mitochondrial (469 aa).

Positions 199, 228, 239, 325, 464, and 469 each coordinate substrate. T239 (nucleophile) is an active-site residue.

This sequence belongs to the ArgJ family. Heterodimer of an alpha and a beta chain. Post-translationally, the alpha and beta chains are autoproteolytically processed from a single precursor protein within the mitochondrion.

It is found in the mitochondrion matrix. It catalyses the reaction N(2)-acetyl-L-ornithine + L-glutamate = N-acetyl-L-glutamate + L-ornithine. The catalysed reaction is L-glutamate + acetyl-CoA = N-acetyl-L-glutamate + CoA + H(+). The protein operates within amino-acid biosynthesis; L-arginine biosynthesis; L-ornithine and N-acetyl-L-glutamate from L-glutamate and N(2)-acetyl-L-ornithine (cyclic): step 1/1. Its pathway is amino-acid biosynthesis; L-arginine biosynthesis; N(2)-acetyl-L-ornithine from L-glutamate: step 1/4. Its function is as follows. Catalyzes two activities which are involved in the cyclic version of arginine biosynthesis: the synthesis of acetylglutamate from glutamate and acetyl-CoA, and of ornithine by transacetylation between acetylornithine and glutamate. The protein is Arginine biosynthesis bifunctional protein ArgJ, mitochondrial of Neurospora crassa (strain ATCC 24698 / 74-OR23-1A / CBS 708.71 / DSM 1257 / FGSC 987).